Consider the following 100-residue polypeptide: Spleen trypsin inhibitor I (100 aa).

A signal peptide spans methionine 1–alanine 21. Positions serine 22–lysine 33 are excised as a propeptide. The BPTI/Kunitz inhibitor domain occupies cysteine 40 to cysteine 90. Cystine bridges form between cysteine 40-cysteine 90, cysteine 49-cysteine 73, and cysteine 65-cysteine 86. Leucine 100 is a propeptide.

The protein resides in the secreted. This is Spleen trypsin inhibitor I from Bos taurus (Bovine).